The primary structure comprises 485 residues: MSLKLKTIKSTKWSALSSLTIIVLGFLQMVILSRILEPFEFGVLSIMTVVFLFTDMLADCGLSNAIIQKKNITLDELSALYWVNIFLGVFLFVVTIILSYEISSWMRLDRLSFLIQLTALVFIIMPHGQQYRALMQKELEFDILSKIESFSYLTGFCLTVIIGIITKNASCAVFGYLLTVSMRTVILSFVGRKYYHPTWKRSKLREIKKQLLFSFYLTLDSILNYINSSITTPIVARVLGAIYVGGYNLSFNVAVNPPSKISPIITRVLFPALSKIQDDKERLRINFFKLLHVISYINFPALLGLCIIAKDFVYLVFGEKWLFIVPTLQLLCIAGAMRMVANPIGSLLMAKAKMELSVRFNFVKIIIFIPVLYFSTIWNGMVGAAIGFLICQAINALLSYFFLLKPVLGNCIVDYINSFFIPFVHTLPMILLLLVCDIYIDKISLTFFILKIVIGGGVYILTIFISPNKLLAEMKGLFRQLLLKS.

Transmembrane regions (helical) follow at residues 13 to 33, 38 to 58, 79 to 99, 111 to 131, 160 to 180, 211 to 231, 234 to 254, 297 to 317, 321 to 341, 365 to 385, 388 to 408, 420 to 440, and 445 to 465; these read WSAL…VILS, PFEF…DMLA, ALYW…IILS, LSFL…GQQY, VIIG…LLTV, LLFS…SSIT, IVAR…FNVA, INFP…YLVF, WLFI…RMVA, IIIF…VGAA, FLIC…KPVL, FIPF…DIYI, and LTFF…TIFI.

This sequence belongs to the polysaccharide synthase family.

The protein localises to the cell membrane. This is an uncharacterized protein from Klebsiella pneumoniae.